A 552-amino-acid polypeptide reads, in one-letter code: Putative transport protein YE4162 (552 aa).

6 consecutive transmembrane segments (helical) span residues 1 to 21 (MSAI…GLWI), 26 to 46 (VYGV…VGHF), 65 to 85 (FGLI…FFSS), 96 to 116 (FAIL…KLFA), 119 to 139 (LPII…LGAA), and 158 to 178 (MGYA…MWLI). 2 RCK C-terminal domains span residues 192–276 (EFDS…VVGE) and 279–361 (DVTL…VVGN). The next 6 helical transmembrane spans lie at 371–391 (MLPV…PLFI), 393–413 (GFPA…ALIL), 439–459 (IVLF…NTLV), 464–484 (LAWI…VGIL), 493–513 (YLTL…LAFA), and 530–550 (VYPL…VLFW).

This sequence belongs to the AAE transporter (TC 2.A.81) family. YidE subfamily.

It is found in the cell membrane. This chain is Putative transport protein YE4162, found in Yersinia enterocolitica serotype O:8 / biotype 1B (strain NCTC 13174 / 8081).